Here is a 150-residue protein sequence, read N- to C-terminus: D-aminoacyl-tRNA deacylase (150 aa).

The Gly-cisPro motif, important for rejection of L-amino acids motif lies at 136–137 (GP).

The protein belongs to the DTD family. In terms of assembly, homodimer.

It localises to the cytoplasm. It carries out the reaction glycyl-tRNA(Ala) + H2O = tRNA(Ala) + glycine + H(+). It catalyses the reaction a D-aminoacyl-tRNA + H2O = a tRNA + a D-alpha-amino acid + H(+). In terms of biological role, an aminoacyl-tRNA editing enzyme that deacylates mischarged D-aminoacyl-tRNAs. Also deacylates mischarged glycyl-tRNA(Ala), protecting cells against glycine mischarging by AlaRS. Acts via tRNA-based rather than protein-based catalysis; rejects L-amino acids rather than detecting D-amino acids in the active site. By recycling D-aminoacyl-tRNA to D-amino acids and free tRNA molecules, this enzyme counteracts the toxicity associated with the formation of D-aminoacyl-tRNA entities in vivo and helps enforce protein L-homochirality. The chain is D-aminoacyl-tRNA deacylase from Staphylococcus aureus (strain Mu50 / ATCC 700699).